We begin with the raw amino-acid sequence, 232 residues long: Ubiquinone biosynthesis O-methyltransferase (232 aa).

S-adenosyl-L-methionine contacts are provided by Arg36, Gly55, Asp76, and Leu120.

This sequence belongs to the methyltransferase superfamily. UbiG/COQ3 family.

It carries out the reaction a 3-demethylubiquinol + S-adenosyl-L-methionine = a ubiquinol + S-adenosyl-L-homocysteine + H(+). It catalyses the reaction a 3-(all-trans-polyprenyl)benzene-1,2-diol + S-adenosyl-L-methionine = a 2-methoxy-6-(all-trans-polyprenyl)phenol + S-adenosyl-L-homocysteine + H(+). The protein operates within cofactor biosynthesis; ubiquinone biosynthesis. Its function is as follows. O-methyltransferase that catalyzes the 2 O-methylation steps in the ubiquinone biosynthetic pathway. The chain is Ubiquinone biosynthesis O-methyltransferase from Pseudomonas putida (strain ATCC 700007 / DSM 6899 / JCM 31910 / BCRC 17059 / LMG 24140 / F1).